The primary structure comprises 802 residues: Elongation factor G, mitochondrial (802 aa).

The N-terminal 24 residues, 1–24 (MRCPSLARLPNRALSGLTRSPVRL), are a transit peptide targeting the mitochondrion. Positions 100 to 387 (SRLRNIGIAA…GVIDYLPNPS (288 aa)) constitute a tr-type G domain. Residues 109 to 116 (AHIDSGKT), 185 to 189 (DTPGH), and 239 to 242 (NKMD) each bind GTP.

It belongs to the TRAFAC class translation factor GTPase superfamily. Classic translation factor GTPase family. EF-G/EF-2 subfamily.

Its subcellular location is the mitochondrion. It functions in the pathway protein biosynthesis; polypeptide chain elongation. Functionally, mitochondrial GTPase that catalyzes the GTP-dependent ribosomal translocation step during translation elongation. During this step, the ribosome changes from the pre-translocational (PRE) to the post-translocational (POST) state as the newly formed A-site-bound peptidyl-tRNA and P-site-bound deacylated tRNA move to the P and E sites, respectively. Catalyzes the coordinated movement of the two tRNA molecules, the mRNA and conformational changes in the ribosome. This Aspergillus fumigatus (strain CBS 144.89 / FGSC A1163 / CEA10) (Neosartorya fumigata) protein is Elongation factor G, mitochondrial (mef1).